The primary structure comprises 97 residues: uncharacterized protein (97 aa).

Residues 38–97 form a disordered region; the sequence is TSPPDWNKFSGKVSINEPTTSKSKSKSTSTSTSTSTSTSTSTSTSSSTSSTSSTTSSINK. Low complexity predominate over residues 56–97; the sequence is TTSKSKSKSTSTSTSTSTSTSTSTSTSSSTSSTSSTTSSINK.

This is an uncharacterized protein from Dictyostelium discoideum (Social amoeba).